The chain runs to 855 residues: DNA mismatch repair protein MutS (855 aa).

613-620 lines the ATP pocket; that stretch reads GPNMGGKS. Positions 796 to 816 are disordered; that stretch reads TTSLPHEMPSQQSGKPASPMQ.

This sequence belongs to the DNA mismatch repair MutS family.

Functionally, this protein is involved in the repair of mismatches in DNA. It is possible that it carries out the mismatch recognition step. This protein has a weak ATPase activity. The protein is DNA mismatch repair protein MutS of Pseudomonas aeruginosa (strain ATCC 15692 / DSM 22644 / CIP 104116 / JCM 14847 / LMG 12228 / 1C / PRS 101 / PAO1).